Consider the following 363-residue polypeptide: Adenosine deaminase (363 aa).

Positions 42 and 44 each coordinate Zn(2+). A purine D-ribonucleoside-binding positions include 44 to 46 (HLD), Asp172, and Gly201. Residues 170–184 (IGDTGHRAADIKASA) are gating helix loop; regulates binding affinity for substrates and thus substrate selectivity. Zn(2+) is bound at residue His226. The a purine D-ribonucleoside site is built by Glu229, His253, and Asp310. Position 310 (Asp310) interacts with Zn(2+).

It belongs to the metallo-dependent hydrolases superfamily. Adenosine and AMP deaminases family. Zn(2+) is required as a cofactor.

It carries out the reaction adenosine + H2O + H(+) = inosine + NH4(+). The catalysed reaction is S-methyl-5'-thioadenosine + H2O + H(+) = S-methyl-5'-thioinosine + NH4(+). Its pathway is purine metabolism; purine nucleoside salvage. Its activity is regulated as follows. Inhibited by coformycin and methylthiocoformycin (MT-coformycin). Catalyzes the hydrolytic deamination of adenosine to produce inosine. Unlike mammalian adenosine deaminases, also catalyzes the deamination of 5'-methylthioadenosine (MTA), a by-product of polyamine biosynthesis, to produce 5'-methylthioinosine (MTI). Plays an essential role in the purine salvage pathway which allows the parasite to use host cell purines for the synthesis of nucleic acids. The protein is Adenosine deaminase of Plasmodium knowlesi.